A 333-amino-acid polypeptide reads, in one-letter code: Nucleoid-associated protein YE1421 (333 aa).

Belongs to the YejK family.

The protein localises to the cytoplasm. It localises to the nucleoid. The protein is Nucleoid-associated protein YE1421 of Yersinia enterocolitica serotype O:8 / biotype 1B (strain NCTC 13174 / 8081).